We begin with the raw amino-acid sequence, 132 residues long: Small ribosomal subunit protein uS8 (132 aa).

This sequence belongs to the universal ribosomal protein uS8 family. As to quaternary structure, part of the 30S ribosomal subunit. Contacts proteins S5 and S12.

In terms of biological role, one of the primary rRNA binding proteins, it binds directly to 16S rRNA central domain where it helps coordinate assembly of the platform of the 30S subunit. The sequence is that of Small ribosomal subunit protein uS8 from Streptococcus pneumoniae serotype 19F (strain G54).